The sequence spans 692 residues: Elongation factor G (692 aa).

A tr-type G domain is found at 8 to 282 (ENTRNIGIMA…AVIDYLPSPL (275 aa)). GTP contacts are provided by residues 17–24 (AHIDAGKT), 81–85 (DTPGH), and 135–138 (NKMD).

Belongs to the TRAFAC class translation factor GTPase superfamily. Classic translation factor GTPase family. EF-G/EF-2 subfamily.

Its subcellular location is the cytoplasm. In terms of biological role, catalyzes the GTP-dependent ribosomal translocation step during translation elongation. During this step, the ribosome changes from the pre-translocational (PRE) to the post-translocational (POST) state as the newly formed A-site-bound peptidyl-tRNA and P-site-bound deacylated tRNA move to the P and E sites, respectively. Catalyzes the coordinated movement of the two tRNA molecules, the mRNA and conformational changes in the ribosome. In Bacillus cereus (strain G9842), this protein is Elongation factor G.